The sequence spans 274 residues: DNA repair protein Rad1 (274 aa).

The protein belongs to the rad1 family. As to quaternary structure, component of the 9-1-1 checkpoint clamp complex consisting of Rad9 isoform A, Rad1 and Hus1-like; the interaction with Hus1-like is direct. Does not interact directly with Rad9; this interaction is probably mediated by Hus1-like. This complex probably also forms with Rad9 isoform B, however 9-1-1 complex containing Rad9 isoform A localizes to the nuclear periphery. Expressed in ovary.

The protein localises to the cytoplasm. Its subcellular location is the nucleus. It localises to the nucleus envelope. The polypeptide is DNA repair protein Rad1 (Drosophila melanogaster (Fruit fly)).